Consider the following 75-residue polypeptide: UPF0270 protein PFLU_4323 (75 aa).

This sequence belongs to the UPF0270 family.

The polypeptide is UPF0270 protein PFLU_4323 (Pseudomonas fluorescens (strain SBW25)).